The chain runs to 608 residues: Dolichyl-diphosphooligosaccharide--protein glycosyltransferase subunit 1 (608 aa).

The first 24 residues, 1–24 (MEAPAVCLLPLLLLLWAWAPAPGR), serve as a signal peptide directing secretion. At 25 to 435 (ASPEALPLVN…VVHYTFNKVL (411 aa)) the chain is on the lumenal side. An N6-acetyllysine modification is found at K188. N300 is a glycosylation site (N-linked (GlcNAc...) asparagine). A helical membrane pass occupies residues 436–456 (MLQEPLLVVAAFYILFFTVIV). At 457-607 (YVRLDFSITK…VTKIDHILDA (151 aa)) the chain is on the cytoplasmic side. Position 539 is an N6-acetyllysine; alternate (K539). A Glycyl lysine isopeptide (Lys-Gly) (interchain with G-Cter in SUMO2); alternate cross-link involves residue K539.

The protein belongs to the OST1 family. Component of the oligosaccharyltransferase (OST) complex. OST exists in two different complex forms which contain common core subunits RPN1, RPN2, OST48, OST4, DAD1 and TMEM258, either STT3A or STT3B as catalytic subunits, and form-specific accessory subunits. STT3A complex assembly occurs through the formation of 3 subcomplexes. Subcomplex 1 contains RPN1 and TMEM258, subcomplex 2 contains the STT3A-specific subunits STT3A, DC2/OSTC, and KCP2 as well as the core subunit OST4, and subcomplex 3 contains RPN2, DAD1, and OST48. The STT3A complex can form stable complexes with the Sec61 complex or with both the Sec61 and TRAP complexes. Interacts with TMEM35A/NACHO. Post-translationally, ubiquitinated by the ECS(ASB11) complex. Ufmylated by UFL1 in response to endoplasmic reticulum stress, promoting reticulophagy of endoplasmic reticulum sheets. In terms of tissue distribution, detected in liver (at protein level).

The protein localises to the endoplasmic reticulum membrane. The protein operates within protein modification; protein glycosylation. Subunit of the oligosaccharyl transferase (OST) complex that catalyzes the initial transfer of a defined glycan (Glc(3)Man(9)GlcNAc(2) in eukaryotes) from the lipid carrier dolichol-pyrophosphate to an asparagine residue within an Asn-X-Ser/Thr consensus motif in nascent polypeptide chains, the first step in protein N-glycosylation. N-glycosylation occurs cotranslationally and the complex associates with the Sec61 complex at the channel-forming translocon complex that mediates protein translocation across the endoplasmic reticulum (ER). All subunits are required for a maximal enzyme activity. The polypeptide is Dolichyl-diphosphooligosaccharide--protein glycosyltransferase subunit 1 (Sus scrofa (Pig)).